A 193-amino-acid polypeptide reads, in one-letter code: Holliday junction branch migration complex subunit RuvA (193 aa).

The segment at 1-64 (MIGRIAGILL…EDAHLLYGFL (64 aa)) is domain I. Positions 65 to 139 (TPQERTTFRE…GKLGADLGAL (75 aa)) are domain II. Positions 139–143 (LAGAA) are flexible linker. A domain III region spans residues 144–193 (SQSDHAADILNALVALGYSEKEGLAAIKNVPAGTGVSEGIKLALKALSKV).

This sequence belongs to the RuvA family. Homotetramer. Forms an RuvA(8)-RuvB(12)-Holliday junction (HJ) complex. HJ DNA is sandwiched between 2 RuvA tetramers; dsDNA enters through RuvA and exits via RuvB. An RuvB hexamer assembles on each DNA strand where it exits the tetramer. Each RuvB hexamer is contacted by two RuvA subunits (via domain III) on 2 adjacent RuvB subunits; this complex drives branch migration. In the full resolvosome a probable DNA-RuvA(4)-RuvB(12)-RuvC(2) complex forms which resolves the HJ.

Its subcellular location is the cytoplasm. Functionally, the RuvA-RuvB-RuvC complex processes Holliday junction (HJ) DNA during genetic recombination and DNA repair, while the RuvA-RuvB complex plays an important role in the rescue of blocked DNA replication forks via replication fork reversal (RFR). RuvA specifically binds to HJ cruciform DNA, conferring on it an open structure. The RuvB hexamer acts as an ATP-dependent pump, pulling dsDNA into and through the RuvAB complex. HJ branch migration allows RuvC to scan DNA until it finds its consensus sequence, where it cleaves and resolves the cruciform DNA. This is Holliday junction branch migration complex subunit RuvA from Burkholderia ambifaria (strain ATCC BAA-244 / DSM 16087 / CCUG 44356 / LMG 19182 / AMMD) (Burkholderia cepacia (strain AMMD)).